Consider the following 476-residue polypeptide: Splicing factor ESS-2 homolog (476 aa).

N-acetylmethionine is present on Met-1. The span at Met-1 to Arg-18 shows a compositional bias: low complexity. 2 disordered regions span residues Met-1–Arg-36 and Leu-91–Leu-148. Position 3 is a phosphothreonine (Thr-3). Acidic residues predominate over residues Asp-133–Lys-142. A Glycyl lysine isopeptide (Lys-Gly) (interchain with G-Cter in SUMO2) cross-link involves residue Lys-142. Residue Ser-292 is modified to Phosphoserine. Thr-386 carries the phosphothreonine modification. Phosphoserine is present on residues Ser-391 and Ser-395. The tract at residues Ala-413–Gln-465 is disordered. Low complexity predominate over residues Thr-437–Pro-451. Positions Leu-452–Leu-463 are enriched in polar residues.

It belongs to the ESS2 family. Identified in the spliceosome C complex. Interacts with FRA10AC1. Highly expressed in heart, brain and skeletal muscle. Detected at low levels in placenta.

The protein localises to the nucleus. Its function is as follows. May be involved in pre-mRNA splicing. The protein is Splicing factor ESS-2 homolog of Homo sapiens (Human).